Consider the following 83-residue polypeptide: Small ribosomal subunit protein uS17 (83 aa).

This sequence belongs to the universal ribosomal protein uS17 family. In terms of assembly, part of the 30S ribosomal subunit.

In terms of biological role, one of the primary rRNA binding proteins, it binds specifically to the 5'-end of 16S ribosomal RNA. The polypeptide is Small ribosomal subunit protein uS17 (Campylobacter concisus (strain 13826)).